A 570-amino-acid polypeptide reads, in one-letter code: Interleukin-1 receptor accessory protein (570 aa).

The N-terminal stretch at 1 to 20 (MTLLWCVVSLYFYGILQSDA) is a signal peptide. 3 Ig-like C2-type domains span residues 21-128 (SERC…VAFP), 136-226 (SCFN…FHLT), and 242-350 (PPVI…VKQK). The Extracellular segment spans residues 21–367 (SERCDDWGLD…VELACGFGAT (347 aa)). Disulfide bonds link C24–C122, C47–C114, C137–C181, C160–C212, and C266–C332. The N-linked (GlcNAc...) asparagine glycan is linked to N57. An essential for interaction with PTPRD region spans residues 69-85 (IWYWTRQDRDLEEPINF). N-linked (GlcNAc...) asparagine glycans are attached at residues N107, N111, and N118. N196, N209, and N299 each carry an N-linked (GlcNAc...) asparagine glycan. The helical transmembrane segment at 368-388 (VLLVVILIVVYHVYWLEMVLF) threads the bilayer. Over 389–570 (YRAHFGTDET…GLSYSSLKNV (182 aa)) the chain is Cytoplasmic. A TIR domain is found at 403 to 546 (KEYDIYVSYA…RFWKQLQVAM (144 aa)). The active site involves E482. Residues 549-570 (KKSPRRSSSDEQGLSYSSLKNV) form a disordered region. S557 is subject to Phosphoserine. A compositionally biased stretch (polar residues) spans 558–570 (DEQGLSYSSLKNV).

This sequence belongs to the interleukin-1 receptor family. As to quaternary structure, the interleukin-36 receptor complex is a heterodimer of IL1RL2 and IL1RAP; the association is inhibited by IL36RN. The interleukin-1 receptor complex is a heterodimer of IL1R1 and IL1RAP. Associates with IL1R2 to form a non-signaling interleukin-1 receptor complex. Interacts with IL-33-bound IL1RL1 to form the minimal interleukin-33 signaling complex with a 1:1:1 stoichiometry. Interacts with KIT (independently of stimulation with KITLG/SCF). A mast cell-specific KITLG/SCF-induced interleukin-33 signaling complex contains IL1RL1, IL1RAP, KIT and MYD88. Interacts (via the first immunoglobilin domain) with PTPRD (via the third immunoglobilin domain); induces pre- and postsynaptic differentiation of neurons.

It localises to the cell membrane. The protein localises to the secreted. The enzyme catalyses NAD(+) + H2O = ADP-D-ribose + nicotinamide + H(+). In terms of biological role, coreceptor for IL1RL2 in the IL-36 signaling system. Coreceptor with IL1R1 in the IL-1 signaling system. Associates with IL1R1 bound to IL1B to form the high affinity interleukin-1 receptor complex which mediates interleukin-1-dependent activation of NF-kappa-B and other pathways. Signaling involves the recruitment of adapter molecules such as TOLLIP, MYD88, and IRAK1 or IRAK2 via the respective TIR domains of the receptor/coreceptor subunits. Recruits TOLLIP to the signaling complex. Does not bind to interleukin-1 alone; binding of IL1RN to IL1R1, prevents its association with IL1R1 to form a signaling complex. The cellular response is modulated through a non-signaling association with the membrane IL1R2 decoy receptor. Coreceptor for IL1RL1 in the IL-33 signaling system. Can bidirectionally induce pre- and postsynaptic differentiation of neurons by trans-synaptically binding to PTPRD. May play a role in IL1B-mediated costimulation of IFNG production from T-helper 1 (Th1) cells. Its function is as follows. Associates with secreted ligand-bound IL1R2 and increases the affinity of secreted IL1R2 for IL1B; this complex formation may be the dominant mechanism for neutralization of IL1B by secreted/soluble receptors. Enhances the ability of secreted IL1R1 to inhibit IL-33 signaling. The protein is Interleukin-1 receptor accessory protein (IL1RAP) of Macaca mulatta (Rhesus macaque).